Reading from the N-terminus, the 305-residue chain is tRNA pseudouridine synthase B (305 aa).

Catalysis depends on aspartate 48, which acts as the Nucleophile.

This sequence belongs to the pseudouridine synthase TruB family. Type 1 subfamily.

The enzyme catalyses uridine(55) in tRNA = pseudouridine(55) in tRNA. Its function is as follows. Responsible for synthesis of pseudouridine from uracil-55 in the psi GC loop of transfer RNAs. The chain is tRNA pseudouridine synthase B from Pseudomonas putida (strain ATCC 700007 / DSM 6899 / JCM 31910 / BCRC 17059 / LMG 24140 / F1).